The primary structure comprises 274 residues: uncharacterized protein (274 aa).

A run of 5 helical transmembrane segments spans residues 9–29, 64–84, 135–155, 165–185, and 219–239; these read SLLL…VSIL, WFWH…FFIL, LAGH…ALLL, MSSM…WQNA, and IIVY…LVLG.

It belongs to the steroid 5-alpha reductase family.

It is found in the endoplasmic reticulum membrane. This is an uncharacterized protein from Schizosaccharomyces pombe (strain 972 / ATCC 24843) (Fission yeast).